The following is a 169-amino-acid chain: Required for excision 1-B domain-containing protein (169 aa).

The sequence is that of Required for excision 1-B domain-containing protein from Mus musculus (Mouse).